We begin with the raw amino-acid sequence, 77 residues long: Large ribosomal subunit protein bL28 (77 aa).

Belongs to the bacterial ribosomal protein bL28 family.

This Variovorax paradoxus (strain S110) protein is Large ribosomal subunit protein bL28.